A 658-amino-acid polypeptide reads, in one-letter code: Alkyldihydroxyacetonephosphate synthase, peroxisomal (658 aa).

Residues 1-24 (MAEAAAAAAAAAAAGETSASSGSA) show a composition bias toward low complexity. The tract at residues 1 to 37 (MAEAAAAAAAAAAAGETSASSGSAAERDPDQDRAGRR) is disordered. Residues 1-58 (MAEAAAAAAAAAAAGETSASSGSAAERDPDQDRAGRRLRVLSGHLLGRPQEALSTNEC) constitute a peroxisome transit peptide. Positions 25–35 (AERDPDQDRAG) are enriched in basic and acidic residues. S65 carries the phosphoserine modification. T74 carries the phosphothreonine modification. K102 bears the N6-acetyllysine mark. The region spanning 202–384 (FERIPDIVLW…TEATIKIRPT (183 aa)) is the FAD-binding PCMH-type domain. FAD contacts are provided by residues 234-240 (PIGGGTS), 303-309 (DSLEFST), and 316-319 (TRAS). An N6-acetyllysine modification is found at K347. 368–374 (EGTLGVI) contributes to the FAD binding site. R515 is a substrate binding site. The active-site Proton donor/acceptor is Y578. Important for enzyme activity regions lie at residues 615-617 (HHH) and 654-658 (NRNLL).

This sequence belongs to the FAD-binding oxidoreductase/transferase type 4 family. In terms of assembly, homodimer. The cofactor is FAD.

It localises to the peroxisome membrane. The protein localises to the peroxisome. The catalysed reaction is a long chain fatty alcohol + a 1-acylglycerone 3-phosphate = a 1-O-alkylglycerone 3-phosphate + a long-chain fatty acid + H(+). It catalyses the reaction hexadecan-1-ol + 1-hexadecanoylglycerone 3-phosphate = 1-O-hexadecylglycerone 3-phosphate + hexadecanoate + H(+). The enzyme catalyses 1-hexadecanoylglycerone 3-phosphate + a long-chain fatty acid = a 1-acylglycerone 3-phosphate + hexadecanoate. The protein operates within glycerolipid metabolism; ether lipid biosynthesis. With respect to regulation, inhibited by N-ethylmaleimide, p-bromophenacylbromide, 2,4- dinitrofluorobenzene and divalent cations such as such as Mn(2+), Mg(2+) and Zn(2+). Inhibition by p-bromophenacylbromide is strongly pH dependent and is highest at alkaline conditions. In terms of biological role, catalyzes the exchange of the acyl chain in acyl-dihydroxyacetonephosphate (acyl-DHAP) for a long chain fatty alcohol, yielding the first ether linked intermediate, i.e. alkyl-dihydroxyacetonephosphate (alkyl-DHAP), in the pathway of ether lipid biosynthesis. This is Alkyldihydroxyacetonephosphate synthase, peroxisomal (AGPS) from Cavia porcellus (Guinea pig).